The chain runs to 325 residues: Aerobic respiration control sensor protein ArcB homolog (325 aa).

The Cytoplasmic segment spans residues 1–26; the sequence is MKNFKYFAQSYVDWVIRLGRLRFSLL. A helical membrane pass occupies residues 27–47; that stretch reads GVMILAVLALCTQILFSLFIV. Over 48 to 57 the chain is Periplasmic; that stretch reads HQISWVDIFR. A helical membrane pass occupies residues 58–78; that stretch reads SVTFGLLTAPFVIYFFTLLVE. The Cytoplasmic portion of the chain corresponds to 79–325; it reads KLEHSRLDLS…AQLMGRGFNS (247 aa). Positions 128-325 constitute a Histidine kinase domain; sequence TISHEFRTPL…AQLMGRGFNS (198 aa). His-131 is subject to Phosphohistidine; by autocatalysis.

It localises to the cell inner membrane. It catalyses the reaction ATP + protein L-histidine = ADP + protein N-phospho-L-histidine.. Functionally, member of the two-component regulatory system ArcB/ArcA. Activates ArcA by phosphorylation. In Haemophilus influenzae (strain ATCC 51907 / DSM 11121 / KW20 / Rd), this protein is Aerobic respiration control sensor protein ArcB homolog (arcB).